The chain runs to 428 residues: Light-independent protochlorophyllide reductase subunit N (428 aa).

Residues Cys-29, Cys-54, and Cys-115 each contribute to the [4Fe-4S] cluster site.

The protein belongs to the BchN/ChlN family. Protochlorophyllide reductase is composed of three subunits; BchL, BchN and BchB. Forms a heterotetramer of two BchB and two BchN subunits. [4Fe-4S] cluster is required as a cofactor.

It carries out the reaction chlorophyllide a + oxidized 2[4Fe-4S]-[ferredoxin] + 2 ADP + 2 phosphate = protochlorophyllide a + reduced 2[4Fe-4S]-[ferredoxin] + 2 ATP + 2 H2O. It participates in porphyrin-containing compound metabolism; bacteriochlorophyll biosynthesis (light-independent). In terms of biological role, component of the dark-operative protochlorophyllide reductase (DPOR) that uses Mg-ATP and reduced ferredoxin to reduce ring D of protochlorophyllide (Pchlide) to form chlorophyllide a (Chlide). This reaction is light-independent. The NB-protein (BchN-BchB) is the catalytic component of the complex. The chain is Light-independent protochlorophyllide reductase subunit N from Cereibacter sphaeroides (strain ATCC 17029 / ATH 2.4.9) (Rhodobacter sphaeroides).